The following is a 414-amino-acid chain: Tryptophan synthase beta chain (414 aa).

The residue at position 109 (lysine 109) is an N6-(pyridoxal phosphate)lysine.

The protein belongs to the TrpB family. Tetramer of two alpha and two beta chains. Pyridoxal 5'-phosphate is required as a cofactor.

The catalysed reaction is (1S,2R)-1-C-(indol-3-yl)glycerol 3-phosphate + L-serine = D-glyceraldehyde 3-phosphate + L-tryptophan + H2O. Its pathway is amino-acid biosynthesis; L-tryptophan biosynthesis; L-tryptophan from chorismate: step 5/5. In terms of biological role, the beta subunit is responsible for the synthesis of L-tryptophan from indole and L-serine. In Prochlorococcus marinus (strain AS9601), this protein is Tryptophan synthase beta chain.